The sequence spans 118 residues: Ribosome-binding factor A (118 aa).

It belongs to the RbfA family. As to quaternary structure, monomer. Binds 30S ribosomal subunits, but not 50S ribosomal subunits or 70S ribosomes.

It localises to the cytoplasm. Functionally, one of several proteins that assist in the late maturation steps of the functional core of the 30S ribosomal subunit. Associates with free 30S ribosomal subunits (but not with 30S subunits that are part of 70S ribosomes or polysomes). Required for efficient processing of 16S rRNA. May interact with the 5'-terminal helix region of 16S rRNA. The polypeptide is Ribosome-binding factor A (Clostridium beijerinckii (strain ATCC 51743 / NCIMB 8052) (Clostridium acetobutylicum)).